Consider the following 89-residue polypeptide: Small ribosomal subunit protein uS15 (89 aa).

This sequence belongs to the universal ribosomal protein uS15 family. In terms of assembly, part of the 30S ribosomal subunit. Forms a bridge to the 50S subunit in the 70S ribosome, contacting the 23S rRNA.

Functionally, one of the primary rRNA binding proteins, it binds directly to 16S rRNA where it helps nucleate assembly of the platform of the 30S subunit by binding and bridging several RNA helices of the 16S rRNA. In terms of biological role, forms an intersubunit bridge (bridge B4) with the 23S rRNA of the 50S subunit in the ribosome. The chain is Small ribosomal subunit protein uS15 from Buchnera aphidicola subsp. Schizaphis graminum (strain Sg).